The primary structure comprises 203 residues: Dephospho-CoA kinase (203 aa).

Residues 4-201 (IIGLTGGIGS…RKYLMLARKH (198 aa)) enclose the DPCK domain. Position 12–17 (12–17 (GSGKTR)) interacts with ATP.

The protein belongs to the CoaE family.

It localises to the cytoplasm. The enzyme catalyses 3'-dephospho-CoA + ATP = ADP + CoA + H(+). The protein operates within cofactor biosynthesis; coenzyme A biosynthesis; CoA from (R)-pantothenate: step 5/5. In terms of biological role, catalyzes the phosphorylation of the 3'-hydroxyl group of dephosphocoenzyme A to form coenzyme A. The protein is Dephospho-CoA kinase of Nitrosomonas europaea (strain ATCC 19718 / CIP 103999 / KCTC 2705 / NBRC 14298).